A 773-amino-acid polypeptide reads, in one-letter code: Kelch domain-containing protein 7A (773 aa).

The helical transmembrane segment at 23-40 (VVLSAAALLLVTAAYKLY) threads the bilayer. Residue asparagine 61 is glycosylated (N-linked (GlcNAc...) asparagine). Disordered regions lie at residues 64–99 (EALG…LDYS) and 114–207 (SEEA…APNG). The residue at position 89 (serine 89) is a Phosphoserine. The span at 114-126 (SEEATRKGSDESQ) shows a compositional bias: basic and acidic residues. An N-linked (GlcNAc...) asparagine glycan is attached at asparagine 256. Residues 296–355 (KADSRPVPCPAALADAPSPGPGPEPLVTGAASRDEAANTAGGGASEAASPQPVASPSAPG) are disordered. 5 Kelch repeats span residues 323–370 (TGAA…ENPE), 488–534 (KRLV…LCTL), 537–585 (YLFV…ALEG), 586–628 (HLYA…ATVC), and 631–673 (EIFV…AVNG). Positions 340-354 (SEAASPQPVASPSAP) are enriched in low complexity. At serine 361 the chain carries Phosphoserine.

The protein localises to the membrane. The protein is Kelch domain-containing protein 7A (Klhdc7a) of Mus musculus (Mouse).